The primary structure comprises 448 residues: Chromosomal replication initiator protein DnaA (448 aa).

The interval 1-73 (MNAQLKQLWT…INAIKLITSK (73 aa)) is domain I, interacts with DnaA modulators. Residues 73-109 (KKYNIEFSITSEEIFNNQQLKPKSSNDNIVVNDEMTS) form a domain II region. The interval 110-326 (ILNPKYTFDS…GALIRIVAYS (217 aa)) is domain III, AAA+ region. Positions 154, 156, 157, and 158 each coordinate ATP. A domain IV, binds dsDNA region spans residues 327 to 448 (SLTNREISVD…DDLNKKITNN (122 aa)).

Belongs to the DnaA family. In terms of assembly, oligomerizes as a right-handed, spiral filament on DNA at oriC.

Its subcellular location is the cytoplasm. Plays an essential role in the initiation and regulation of chromosomal replication. ATP-DnaA binds to the origin of replication (oriC) to initiate formation of the DNA replication initiation complex once per cell cycle. Binds the DnaA box (a 9 base pair repeat at the origin) and separates the double-stranded (ds)DNA. Forms a right-handed helical filament on oriC DNA; dsDNA binds to the exterior of the filament while single-stranded (ss)DNA is stabiized in the filament's interior. The ATP-DnaA-oriC complex binds and stabilizes one strand of the AT-rich DNA unwinding element (DUE), permitting loading of DNA polymerase. After initiation quickly degrades to an ADP-DnaA complex that is not apt for DNA replication. Binds acidic phospholipids. In Clostridium novyi (strain NT), this protein is Chromosomal replication initiator protein DnaA.